The primary structure comprises 185 residues: Casparian strip membrane protein 2 (185 aa).

Residues 1–25 (MKAVSIEAGEGSKAKRVHGVNRGIS) are Cytoplasmic-facing. A helical transmembrane segment spans residues 26-46 (VFDLVLRIVALVGTLASAVAM). At 47–73 (GTADQALSFSTQIVNFEAQYDDIDAFK) the chain is on the extracellular side. A helical transmembrane segment spans residues 74–94 (FFVVSNSITCVYLALSIPISI). The Cytoplasmic segment spans residues 95-106 (FHIIRSRAGKSR). The helical transmembrane segment at 107 to 127 (VLLIVLDAIMLVFLTSGASAA) threads the bilayer. The Extracellular portion of the chain corresponds to 128 to 160 (AAIVYLAHNGNTSTNWFSICQQYTDFCQRSAGS). Asparagine 138 carries N-linked (GlcNAc...) asparagine glycosylation. A helical transmembrane segment spans residues 161 to 181 (LIGSFGAMALMVLLIILSSIA). Residues 182 to 185 (LSRR) lie on the Cytoplasmic side of the membrane.

The protein belongs to the Casparian strip membrane proteins (CASP) family. In terms of assembly, homodimer and heterodimers.

The protein resides in the cell membrane. Its function is as follows. Regulates membrane-cell wall junctions and localized cell wall deposition. Required for establishment of the Casparian strip membrane domain (CSD) and the subsequent formation of Casparian strips, a cell wall modification of the root endodermis that determines an apoplastic barrier between the intraorganismal apoplasm and the extraorganismal apoplasm and prevents lateral diffusion. In Solanum demissum (Wild potato), this protein is Casparian strip membrane protein 2.